The sequence spans 119 residues: Large ribosomal subunit protein bL20 (119 aa).

It belongs to the bacterial ribosomal protein bL20 family. Part of the 50S ribosomal subunit.

In terms of biological role, binds directly to 23S ribosomal RNA and is necessary for the in vitro assembly process of the 50S ribosomal subunit. It is not involved in the protein synthesizing functions of that subunit. In Bacillus subtilis (strain 168), this protein is Large ribosomal subunit protein bL20 (rplT).